Reading from the N-terminus, the 1096-residue chain is uncharacterized protein (1096 aa).

It belongs to the IIV-6 261R/396L/443R family.

This is an uncharacterized protein from Invertebrate iridescent virus 3 (IIV-3).